The following is a 597-amino-acid chain: Period protein homolog lin-42 (597 aa).

Residues 1–44 (MEPAGHSSATHNIVVPNANPTQPQPLAPAMREEGATLSPPNTWS) are disordered. The PAS domain occupies 155–223 (LQASHVSSNF…VRQAHIDLHN (69 aa)). Disordered stretches follow at residues 313–335 (PVPS…QNQG), 418–450 (KSQS…EALT), 473–509 (DDVP…PPPG), and 555–597 (DGLL…DSQN). The span at 425–438 (SPAKQDEPFDEKKY) shows a compositional bias: basic and acidic residues. A compositionally biased stretch (polar residues) spans 487-497 (IHWTSSSQNHY). A compositionally biased stretch (low complexity) spans 561-577 (GATSTGGASPTSGTNSP).

The protein localises to the nucleus. Its subcellular location is the cytoplasm. In terms of biological role, transcriptional repressor which interacts with the promoter region of target genes. Has a specific role in developmental timing where it regulates temporal expression of a number of miRNAs and mRNAs. Controls temporal cell fate transition during embryonic and early larval development by restricting the expression of specific miRNAs, including let-7, miR-48, lin-4, miR-35 and miR-58. Restricts the accumulation of lin-29 in the hypodermis to the larval L4 stage, thus controlling terminal differentiation of seam cells. Has a role in the miRNA-mediated specification of asymmetric gene expression patterns in gustatory neurons. May also regulate genes involved in other biological processes including transport, small molecule metabolism, and growth. Inhibits dauer formation, by antagonizing daf-12. Specifically required for maintaining the timing of larval development and molting cycle rhythms. The sequence is that of Period protein homolog lin-42 from Caenorhabditis elegans.